A 943-amino-acid polypeptide reads, in one-letter code: Translation initiation factor IF-2 (943 aa).

The span at 99 to 113 (VKAAQTQAAPVQPEQ) shows a compositional bias: low complexity. The tract at residues 99–354 (VKAAQTQAAP…LEPNQHAFQA (256 aa)) is disordered. Residues 117–141 (DAVKARAEAAARAEARAKAEAEAAK) show a composition bias toward basic and acidic residues. The segment covering 145–172 (AKAGNKAKPAAQKPTEAKAETAPVAAET) has biased composition (low complexity). Residues 173 to 197 (KPAEPKEKAVKPKHERNGKGKDAKK) show a composition bias toward basic and acidic residues. Residues 200–215 (KPAAPAVPQPVVSAEE) show a composition bias toward low complexity. Basic and acidic residues predominate over residues 216–250 (QAQRDEEARRAAALRAHQEALLKEKQERQARREAM). The segment covering 251-264 (KQQAEQQAKAAQEA) has biased composition (low complexity). Composition is skewed to basic and acidic residues over residues 295–308 (AKKEDRRNRDDEGQ) and 319–335 (GGRDRNNARNGGDERVR). Residues 443–612 (PRPPVVTVMG…LLEAEVLELT (170 aa)) form the tr-type G domain. The tract at residues 452-459 (GHVDHGKT) is G1. 452 to 459 (GHVDHGKT) is a GTP binding site. Positions 477–481 (GITQH) are G2. The interval 498-501 (DTPG) is G3. GTP contacts are provided by residues 498-502 (DTPGH) and 552-555 (NKID). The interval 552-555 (NKID) is G4. The G5 stretch occupies residues 588–590 (SAK).

Belongs to the TRAFAC class translation factor GTPase superfamily. Classic translation factor GTPase family. IF-2 subfamily.

It localises to the cytoplasm. Functionally, one of the essential components for the initiation of protein synthesis. Protects formylmethionyl-tRNA from spontaneous hydrolysis and promotes its binding to the 30S ribosomal subunits. Also involved in the hydrolysis of GTP during the formation of the 70S ribosomal complex. The sequence is that of Translation initiation factor IF-2 from Neisseria gonorrhoeae (strain NCCP11945).